We begin with the raw amino-acid sequence, 413 residues long: Putative ankyrin repeat protein L92 (413 aa).

8 ANK repeats span residues 1–28, 32–67, 68–104, 105–134, 137–170, 174–208, 212–242, and 246–275; these read MCAC…DINC, DGMS…DVNL, TVDG…LFES, DDDD…NIEA, DGET…KTNI, DRKT…NINY, IGET…NPNI, and SGNT…SPEI.

This chain is Putative ankyrin repeat protein L92, found in Acanthamoeba polyphaga mimivirus (APMV).